The chain runs to 349 residues: Ethyl acetate hydrolase (349 aa).

Residues 67–300 enclose the AB hydrolase-1 domain; sequence YIGEGRALDP…SHDQFFTVDD (234 aa). S139 acts as the Nucleophile in catalysis. Catalysis depends on residues D293 and H322.

It belongs to the AB hydrolase superfamily. Acetyl esterase family. As to quaternary structure, homodimer.

The catalysed reaction is ethyl acetate + H2O = ethanol + acetate + H(+). Esterase that catalyzes the hydrolysis of ethyl acetate. Involved in the degradation of short chain methyl ketones (MEK) such as 2-butanone and 2-hexanone. In vitro, can also hydrolyze vinyl acetate, 4-nitrophenyl acetate, methyl acetate, propyl acetate, benzyl acetate and methyl propionate. The highest activities are obtained with acetic acid esters, but the alcohol group also plays an important role, as compounds with two carbon atoms in the alcohol moiety, i.e., vinyl and ethyl acetate, are by far the preferred substrates. In Pseudomonas veronii, this protein is Ethyl acetate hydrolase.